The chain runs to 459 residues: Ribulose bisphosphate carboxylase/oxygenase activase, chloroplastic (459 aa).

164 to 171 provides a ligand contact to ATP; sequence GGKGQGKS.

It belongs to the RuBisCO activase family.

The protein localises to the plastid. It localises to the chloroplast stroma. Its function is as follows. Activation of RuBisCO (ribulose-1,5-bisphosphate carboxylase/oxygenase; EC 4.1.1.39) involves the ATP-dependent carboxylation of the epsilon-amino group of lysine leading to a carbamate structure. This Solanum pennellii (Tomato) protein is Ribulose bisphosphate carboxylase/oxygenase activase, chloroplastic.